A 67-amino-acid polypeptide reads, in one-letter code: UPF0337 protein Atu4724 (67 aa).

Belongs to the UPF0337 (CsbD) family.

The chain is UPF0337 protein Atu4724 from Agrobacterium fabrum (strain C58 / ATCC 33970) (Agrobacterium tumefaciens (strain C58)).